Reading from the N-terminus, the 610-residue chain is UvrABC system protein C (610 aa).

The GIY-YIG domain occupies serine 16–valine 94. The 36-residue stretch at aspartate 204–valine 239 folds into the UVR domain.

Belongs to the UvrC family. In terms of assembly, interacts with UvrB in an incision complex.

The protein localises to the cytoplasm. Its function is as follows. The UvrABC repair system catalyzes the recognition and processing of DNA lesions. UvrC both incises the 5' and 3' sides of the lesion. The N-terminal half is responsible for the 3' incision and the C-terminal half is responsible for the 5' incision. This is UvrABC system protein C from Salmonella heidelberg (strain SL476).